The sequence spans 425 residues: Nuclear pore complex-interacting protein family member B6 (425 aa).

Residues 332–414 (SPLPPSVDDN…RRLSKLRTRH (83 aa)) are disordered. Residues 353 to 395 (EVEKPPKPKRWRVDEVEQSPKPKRRRVDEVEQSPKPKRQREAE) are compositionally biased toward basic and acidic residues. Over residues 401–414 (KPKRRRLSKLRTRH) the composition is skewed to basic residues.

It belongs to the NPIP family.

The chain is Nuclear pore complex-interacting protein family member B6 (NPIPB6) from Homo sapiens (Human).